The chain runs to 1139 residues: Integrin alpha ina-1 (1139 aa).

The first 19 residues, 1-19 (MRECIISWTLLLCLSCVKS), serve as a signal peptide directing secretion. The Extracellular segment spans residues 20–1084 (FNLDVNAPIY…PTIGDSRPIP (1065 aa)). An FG-GAP 1 repeat occupies 21–85 (NLDVNAPIYR…CDINTFYNGG (65 aa)). 2 N-linked (GlcNAc...) asparagine glycosylation sites follow: Asn-108 and Asn-136. FG-GAP repeat units follow at residues 111 to 171 (RGRT…LQST), 180 to 231 (LPTT…IFDS), 242 to 302 (NGDM…SSSK), 307 to 370 (EDKF…QRKQ), 378 to 438 (HPPK…IEKF), and 448 to 510 (GNDL…MEKR). Asn-313 is a glycosylation site (N-linked (GlcNAc...) asparagine). Asn-580, Asn-788, Asn-851, and Asn-1026 each carry an N-linked (GlcNAc...) asparagine glycan. The chain crosses the membrane as a helical span at residues 1085–1106 (WWIYVIAAVIGVLILSLIIICL). The Cytoplasmic segment spans residues 1107–1139 (SKCGFFKRNRLDQPSLYTAQLKHEREEWADTGL).

It belongs to the integrin alpha chain family. As to quaternary structure, heterodimer of an alpha and a beta subunit. Alpha ina-1 associates with beta pat-3. Interacts (via cytoplasmic domain) with src-1 (when phosphorylated at 'Tyr-416').

The protein localises to the membrane. Its subcellular location is the cell projection. The protein resides in the phagocytic cup. It localises to the cytoplasmic vesicle. It is found in the phagosome membrane. In terms of biological role, plays a role in cell migration, axon fasciculation, and morphogenesis. During gonad morphogenesis, involved in distal tip cell (DTC)-mediated guidance of gonad elongation, in maintaining their sharp tapering morphology and in their migration. Involved in the anterior-posterior positioning of QR neuroblast descendants by regulating the migratory speed of QR.p. Probably by acting as a receptor for apoptotic cells, plays a role in the clearance of apoptotic cells during mid-embryogenesis. This is Integrin alpha ina-1 (ina-1) from Caenorhabditis elegans.